The chain runs to 508 residues: GMP synthase [glutamine-hydrolyzing] (508 aa).

The Glutamine amidotransferase type-1 domain occupies Met1–Thr189. The active-site Nucleophile is the Cys78. Residues His163 and Glu165 contribute to the active site. Residues Trp190–Arg383 enclose the GMPS ATP-PPase domain. Ser217–Thr223 is an ATP binding site.

Homodimer.

The enzyme catalyses XMP + L-glutamine + ATP + H2O = GMP + L-glutamate + AMP + diphosphate + 2 H(+). The protein operates within purine metabolism; GMP biosynthesis; GMP from XMP (L-Gln route): step 1/1. Its function is as follows. Catalyzes the synthesis of GMP from XMP. The sequence is that of GMP synthase [glutamine-hydrolyzing] (guaA) from Helicobacter pylori (strain J99 / ATCC 700824) (Campylobacter pylori J99).